The following is a 308-amino-acid chain: N-acetylmuramic acid 6-phosphate etherase (308 aa).

Residues 62–225 enclose the SIS domain; the sequence is TAARLRQGGR…STGVMVQLGK (164 aa). Glutamate 90 functions as the Proton donor in the catalytic mechanism. Residue glutamate 121 is part of the active site.

It belongs to the GCKR-like family. MurNAc-6-P etherase subfamily. In terms of assembly, homodimer.

It carries out the reaction N-acetyl-D-muramate 6-phosphate + H2O = N-acetyl-D-glucosamine 6-phosphate + (R)-lactate. It functions in the pathway amino-sugar metabolism; N-acetylmuramate degradation. Its function is as follows. Specifically catalyzes the cleavage of the D-lactyl ether substituent of MurNAc 6-phosphate, producing GlcNAc 6-phosphate and D-lactate. In Thermosynechococcus vestitus (strain NIES-2133 / IAM M-273 / BP-1), this protein is N-acetylmuramic acid 6-phosphate etherase.